A 377-amino-acid chain; its full sequence is NADP-dependent oxidoreductase lnbE (377 aa).

Residues 170 to 173, 257 to 263, and 293 to 295 contribute to the NADP(+) site; these read GGNG, LTNPRVS, and SPV.

The protein belongs to the NADP-dependent oxidoreductase L4BD family.

Its pathway is secondary metabolite biosynthesis. Its function is as follows. NADP-dependent oxidoreductase; part of the lnb gene cluster that mediates the biosynthesis of diastereomeric piperazines. Lna and lnb clusters encode sets of enzymes that produce overlapping sets of previously undescribed metabolites such as piperazinomycin-like metabolites or morpholine. The lna and lnb biosynthetic pathways appear to be part of a signaling network that controls the formation of sclerotia, a resilient overwintering structure. One primary function of the non-canonical nonribosomal peptide synthetases lnaA and lnbA consists in the reduction of L-tyrosine. The presence in the clusters of tailoring enzymes such as the oxidoreductases lnaB, lnbB, lnaE or lnbE, as well as of the cytochrome P450 monooxygenases lnaC, lnaD, or lnbC, might explain formation of various diastereomeric piperazines. In Aspergillus flavus (strain ATCC 200026 / FGSC A1120 / IAM 13836 / NRRL 3357 / JCM 12722 / SRRC 167), this protein is NADP-dependent oxidoreductase lnbE.